An 870-amino-acid polypeptide reads, in one-letter code: MCIQPDSLEDAYKIPRPVHREEFTQLSPSFFQTATFQLEKTNEKNNIEEPKKNKAFLNSKIIYKDLFEIRKLSNNFVNTSHPTCTETMNEQNEFSDEENFKFFGLGGCNEVGRSCHIIEYKNKVIMLDSGMHPALSGHASFPYFDEYDISKVDILLISHFHVDHSASLPYVMQQSNFRGKVFMTHATKAIYRWLMQDFVRVTSIGNSRSEDGGGGEGSNLYTDDDIMKSFDRIETIDYHSTMEIDGIRFTAYHAGHVLGACMYFIEIGGLKVLFTGDYSREENRHLHAAEVPPLKPDILISESTFGTGTLEPRIELERKLTTHIHATIAKGGRVLLPVFALGNAQELLLILDEYWSQNEDLQNVNVFYASNLAKKCMAVYETYTGIMNDKIRLSSASSEKSNPFDFKYIKSIKDLSKFQDMGPSVVVATPGMLQAGVSRQLLEKWAPDGKNLVILTGYSVEGTMAKELLKEPTMIQSATNPDMTIPRRIGIEEISFAAHVDFQQNSEFIEKVSPSKVILVHGDSVPMGRLKSALLSKYASRKGTDQEVKVYNPKNCEELIIGFKGLKIAKVLGSLAEEQLQVLKKIIQDEVSAENSKITELTEEKEEADEIKEDNGETDTTQKPNESSINVLKTGQVVSGVLVSKDFNLNLLQLQDLHEFTQLSTSIVKSKMHLKINADISLMVWHLEQMFGYINVINDDDEEWECVIMDVVDVFIDRSKGPGLFITVEWINDNLMADSLADSVIAILYSIDSSPASVKLSSQNHNHGDNHIVKKEDSMEIDRPVEAHAKTDIKSRIERIALLLKAQFGDSLKELPEEKAIIQIGKTVANVDYKRLEVECSSKVLKDRVENVIKRGCQLTAPLSQNPKIA.

Zn(2+) contacts are provided by His-159, His-161, Asp-163, His-164, His-256, and Asp-277. Catalysis depends on His-499, which acts as the Proton donor. His-521 serves as a coordination point for Zn(2+). The interval 598-627 (ITELTEEKEEADEIKEDNGETDTTQKPNES) is disordered. Residues 601–612 (LTEEKEEADEIK) are compositionally biased toward acidic residues. A compositionally biased stretch (polar residues) spans 618–627 (TDTTQKPNES).

Belongs to the metallo-beta-lactamase superfamily. RNA-metabolizing metallo-beta-lactamase-like family. CPSF2/YSH1 subfamily.

The protein localises to the nucleus. Its function is as follows. Component of the cleavage factor I (CF I) involved in pre-mRNA 3'-end processing. This Candida albicans (strain SC5314 / ATCC MYA-2876) (Yeast) protein is Endoribonuclease YSH1 (YSH1).